The following is a 329-amino-acid chain: Epoxide hydrolase (329 aa).

The 274-residue stretch at 35 to 308 (PAVLFCHGFP…DNVGHWVQHE (274 aa)) folds into the AB hydrolase-1 domain. Aspartate 111 acts as the Nucleophile in catalysis. Tyrosine 242 acts as the Proton donor in catalysis. Catalysis depends on histidine 303, which acts as the Proton acceptor.

It belongs to the AB hydrolase superfamily. Epoxide hydrolase family. Homodimer.

It catalyses the reaction an epoxide + H2O = an ethanediol. The catalysed reaction is (R)-styrene oxide + H2O = (R)-styrene glycol. It carries out the reaction (S)-styrene oxide + H2O = (S)-styrene glycol. The enzyme catalyses 3,4-epoxy-1-cyclohexene + H2O = cyclohex-3-ene-1,2-diol. In terms of biological role, catalyzes the hydrolysis of various epoxides into diols. In vitro, shows the strongest activity toward aromatic and cyclic aliphatic epoxide compounds, since it shows strong activity toward (R)-styrene oxide, (S)-styrene oxide, and 3,4-epoxy-1-cyclohexene, but very weak activity toward (R)-epichlorohydrin, (S)-epichlorohydrin, and 1,2-epoxy-9-decene. The chain is Epoxide hydrolase from Caballeronia sordidicola (Burkholderia sordidicola).